We begin with the raw amino-acid sequence, 720 residues long: Proline-rich receptor-like protein kinase PERK12 (720 aa).

A disordered region spans residues 1 to 240 (MSDLGESPSS…GNGDGGGGGG (240 aa)). At 1 to 246 (MSDLGESPSS…GGGGGYQGKT (246 aa)) the chain is on the extracellular side. The span at 10–25 (SSPPAPPADTAPPPET) shows a compositional bias: pro residues. The segment covering 26 to 35 (PSENSALPPV) has biased composition (low complexity). Pro residues-rich tracts occupy residues 52–84 (LSEP…PSDS) and 92–116 (PSPP…PAPP). Asparagine 117 is a glycosylation site (N-linked (GlcNAc...) asparagine). Composition is skewed to pro residues over residues 123–138 (NPPP…PSSP) and 147–207 (PESP…PPKT). The helical transmembrane segment at 247–267 (MVGMAVAGFAIMALIGVVFLV) threads the bilayer. Residues 268–720 (RRKKKRNIDS…ETRPFNNRRF (453 aa)) are Cytoplasmic-facing. The interval 300–349 (QDPGKGYSSGPNGSMYNNSQQQQSSMGNSYGTAGGGYPHHQMQSSGTPDS) is disordered. The span at 311–330 (NGSMYNNSQQQQSSMGNSYG) shows a compositional bias: low complexity. One can recognise a Protein kinase domain in the interval 371–624 (FARKNILGEG…EVFRMIETAA (254 aa)). Residues 377–385 (LGEGGFGCV) and lysine 399 each bind ATP. Position 444 is a phosphotyrosine (tyrosine 444). Catalysis depends on aspartate 495, which acts as the Proton acceptor. A Phosphoserine modification is found at serine 528. 2 positions are modified to phosphothreonine: threonine 529 and threonine 534. Tyrosine 542 carries the post-translational modification Phosphotyrosine. The disordered stretch occupies residues 698-720 (SAKSSSDFSGNESETRPFNNRRF).

This sequence belongs to the protein kinase superfamily. Ser/Thr protein kinase family. As to expression, mostly expressed in apical parts, including flower buds, and particularly in anthers. Also present in root hairs.

The protein localises to the cell membrane. It carries out the reaction L-seryl-[protein] + ATP = O-phospho-L-seryl-[protein] + ADP + H(+). It catalyses the reaction L-threonyl-[protein] + ATP = O-phospho-L-threonyl-[protein] + ADP + H(+). Its function is as follows. Regulates the auxin-related MAX (More Axillary Growth) pathway during the shoot branching. The polypeptide is Proline-rich receptor-like protein kinase PERK12 (PERK12) (Arabidopsis thaliana (Mouse-ear cress)).